The sequence spans 571 residues: Potassium-transporting ATPase potassium-binding subunit (571 aa).

A run of 10 helical transmembrane segments spans residues 7–27 (LQFA…GGYL), 66–86 (TYAL…YGIA), 137–157 (GLAV…AALI), 188–208 (FVVA…GFIV), 255–275 (IGNF…CFAF), 286–306 (WAVL…AMSF), 390–410 (VGLN…GLMV), 430–450 (TLYI…SVLI), 497–517 (IGVA…AIAG), and 538–558 (LFVG…FFPA).

It belongs to the KdpA family. The system is composed of three essential subunits: KdpA, KdpB and KdpC.

It localises to the cell membrane. Part of the high-affinity ATP-driven potassium transport (or Kdp) system, which catalyzes the hydrolysis of ATP coupled with the electrogenic transport of potassium into the cytoplasm. This subunit binds the extracellular potassium ions and delivers the ions to the membrane domain of KdpB through an intramembrane tunnel. The protein is Potassium-transporting ATPase potassium-binding subunit of Mycobacterium bovis (strain ATCC BAA-935 / AF2122/97).